The chain runs to 284 residues: RNA polymerase sigma factor RpoH (284 aa).

Residues 53–122 (LILSHLRFVV…IHEYVLRNWR (70 aa)) form a sigma-70 factor domain-2 region. Residues 77-80 (DLIQ) carry the Interaction with polymerase core subunit RpoC motif. Residues 228–280 (AMQGLDERSQDIIRARWLDEDNKSTLQELADRYGVSAERVRQLEKNAMKKLRA) form a sigma-70 factor domain-4 region. Positions 253–272 (LQELADRYGVSAERVRQLEK) form a DNA-binding region, H-T-H motif.

Belongs to the sigma-70 factor family. RpoH subfamily. As to quaternary structure, interacts with the RNA polymerase core enzyme.

The protein resides in the cytoplasm. In terms of biological role, sigma factors are initiation factors that promote the attachment of RNA polymerase to specific initiation sites and are then released. This sigma factor is involved in regulation of expression of heat shock genes. In Escherichia coli O6:H1 (strain CFT073 / ATCC 700928 / UPEC), this protein is RNA polymerase sigma factor RpoH.